Reading from the N-terminus, the 94-residue chain is Small ribosomal subunit protein uS19 (94 aa).

The protein belongs to the universal ribosomal protein uS19 family.

In terms of biological role, protein S19 forms a complex with S13 that binds strongly to the 16S ribosomal RNA. This Wolbachia pipientis wMel protein is Small ribosomal subunit protein uS19.